The following is a 430-amino-acid chain: Serine--tRNA ligase (430 aa).

L-serine is bound at residue 235–237; it reads TAE. ATP-binding positions include 266 to 268 and Val282; that span reads RRE. Glu289 is an L-serine binding site. Residue 353 to 356 participates in ATP binding; that stretch reads EASS. Ser389 is an L-serine binding site.

The protein belongs to the class-II aminoacyl-tRNA synthetase family. Type-1 seryl-tRNA synthetase subfamily. In terms of assembly, homodimer. The tRNA molecule binds across the dimer.

It is found in the cytoplasm. The enzyme catalyses tRNA(Ser) + L-serine + ATP = L-seryl-tRNA(Ser) + AMP + diphosphate + H(+). It carries out the reaction tRNA(Sec) + L-serine + ATP = L-seryl-tRNA(Sec) + AMP + diphosphate + H(+). It participates in aminoacyl-tRNA biosynthesis; selenocysteinyl-tRNA(Sec) biosynthesis; L-seryl-tRNA(Sec) from L-serine and tRNA(Sec): step 1/1. Catalyzes the attachment of serine to tRNA(Ser). Is also able to aminoacylate tRNA(Sec) with serine, to form the misacylated tRNA L-seryl-tRNA(Sec), which will be further converted into selenocysteinyl-tRNA(Sec). The protein is Serine--tRNA ligase of Chlorobium luteolum (strain DSM 273 / BCRC 81028 / 2530) (Pelodictyon luteolum).